Reading from the N-terminus, the 143-residue chain is Holo-[acyl-carrier-protein] synthase (143 aa).

2 residues coordinate Mg(2+): Asp8 and Glu62.

The protein belongs to the P-Pant transferase superfamily. AcpS family. Mg(2+) serves as cofactor.

It localises to the cytoplasm. The enzyme catalyses apo-[ACP] + CoA = holo-[ACP] + adenosine 3',5'-bisphosphate + H(+). Transfers the 4'-phosphopantetheine moiety from coenzyme A to a Ser of acyl-carrier-protein. This chain is Holo-[acyl-carrier-protein] synthase, found in Cupriavidus metallidurans (strain ATCC 43123 / DSM 2839 / NBRC 102507 / CH34) (Ralstonia metallidurans).